A 435-amino-acid polypeptide reads, in one-letter code: Zinc finger CCCH domain-containing protein 67 (435 aa).

Positions 1–91 are disordered; sequence MSKPEETSDP…DQKEEEEGSE (91 aa). C3H1-type zinc fingers lie at residues 101 to 129, 148 to 176, and 194 to 222; these read RPDS…HPVR, NPKL…HMKE, and RPGE…HPDP. The segment at 235–274 is disordered; it reads GNNGGSFSPKAPSQASSTSWSSTRHMNGTGTAPFIPSMFP. The span at 247–256 shows a compositional bias: low complexity; it reads SQASSTSWSS. 2 C3H1-type zinc fingers span residues 334–362 and 380–408; these read RPDQ…HPKN and RPDQ…HSIP. The disordered stretch occupies residues 412–435; the sequence is SPSSSQTVEARQVGANGNEDDSWH.

Its subcellular location is the nucleus. The protein is Zinc finger CCCH domain-containing protein 67 of Arabidopsis thaliana (Mouse-ear cress).